The following is a 179-amino-acid chain: Interleukin-10 (179 aa).

The first 19 residues, 1–19, serve as a signal peptide directing secretion; it reads MPSPALLCCCLVLLAGVGA. Cystine bridges form between Cys31–Cys127 and Cys81–Cys133. An N-linked (GlcNAc...) asparagine glycan is attached at Asn135.

It belongs to the IL-10 family. Homodimer. Interacts with IL10RA and IL10RB.

Its subcellular location is the secreted. In terms of biological role, major immune regulatory cytokine that acts on many cells of the immune system where it has profound anti-inflammatory functions, limiting excessive tissue disruption caused by inflammation. Mechanistically, IL10 binds to its heterotetrameric receptor comprising IL10RA and IL10RB leading to JAK1 and STAT2-mediated phosphorylation of STAT3. In turn, STAT3 translocates to the nucleus where it drives expression of anti-inflammatory mediators. Targets antigen-presenting cells (APCs) such as macrophages and monocytes and inhibits their release of pro-inflammatory cytokines including granulocyte-macrophage colony-stimulating factor /GM-CSF, granulocyte colony-stimulating factor/G-CSF, IL-1 alpha, IL-1 beta, IL-6, IL-8 and TNF-alpha. Also interferes with antigen presentation by reducing the expression of MHC-class II and co-stimulatory molecules, thereby inhibiting their ability to induce T cell activation. In addition, controls the inflammatory response of macrophages by reprogramming essential metabolic pathways including mTOR signaling. This is Interleukin-10 (IL10) from Vulpes vulpes (Red fox).